The sequence spans 623 residues: Negative regulator of PDR1-mediated fluconazole resistance JJJ1 (623 aa).

One can recognise a J domain in the interval 4–70 (CYYDLLEVRS…QERAWYDSHK (67 aa)). Residues 363–387 (YDCFICKKSFKSEKQLENHIKTKLH) form a C2H2-type zinc finger. Disordered stretches follow at residues 448–476 (QSSV…KLSN), 499–581 (GADN…NDAK), and 599–623 (SHIQ…KKNK). Over residues 453 to 466 (DSEDFTDDNNDTED) the composition is skewed to acidic residues. The segment covering 499–508 (GADNSETQNA) has biased composition (polar residues). Over residues 525-538 (ELTRILRELEESKT) the composition is skewed to basic and acidic residues. Basic residues-rich tracts occupy residues 553 to 564 (KKKTKAKKKKNK) and 612 to 623 (KVKKGKRSKKNK).

Its subcellular location is the nucleus. Acts as a negative regulator of fluconazole resistance, primarily through down-regulation of the ABC transporter gene CDR1 via inactivation of the PDR1 transcriptional pathway. The protein is Negative regulator of PDR1-mediated fluconazole resistance JJJ1 of Candida glabrata (strain ATCC 2001 / BCRC 20586 / JCM 3761 / NBRC 0622 / NRRL Y-65 / CBS 138) (Yeast).